The primary structure comprises 296 residues: Homoserine kinase (296 aa).

Position 84–94 (84–94 (PLARGLGSSSS)) interacts with ATP.

Belongs to the GHMP kinase family. Homoserine kinase subfamily.

The protein localises to the cytoplasm. It carries out the reaction L-homoserine + ATP = O-phospho-L-homoserine + ADP + H(+). Its pathway is amino-acid biosynthesis; L-threonine biosynthesis; L-threonine from L-aspartate: step 4/5. Catalyzes the ATP-dependent phosphorylation of L-homoserine to L-homoserine phosphate. This chain is Homoserine kinase, found in Lactococcus lactis subsp. cremoris (strain SK11).